The following is a 1381-amino-acid chain: Peroxisomal ATPase PEX6 (1381 aa).

Positions 1 to 10 (MTAPNSTPAS) are enriched in polar residues. Disordered regions lie at residues 1 to 23 (MTAP…QDKP), 247 to 315 (VRTS…DNLS), 333 to 374 (TVTG…DRPR), and 467 to 499 (YSSR…NPPA). Basic residues predominate over residues 11-20 (SRKRVRRRRQ). Composition is skewed to acidic residues over residues 270–284 (AEDD…AEED) and 296–315 (TDAD…DNLS). Polar residues-rich tracts occupy residues 333-345 (TVTG…TGTP), 355-367 (GPGS…TATT), and 487-499 (FFEA…NPPA). Residue 1031 to 1038 (GPPGTGKT) coordinates ATP. Basic and acidic residues-rich tracts occupy residues 1294–1305 (GAKDKDKKKEGA) and 1337–1350 (STKK…KAAD). The disordered stretch occupies residues 1294–1381 (GAKDKDKKKE…GGDEDEGLYD (88 aa)). The span at 1372–1381 (GGDEDEGLYD) shows a compositional bias: acidic residues.

Belongs to the AAA ATPase family. As to quaternary structure, interacts with PEX1; forming the PEX1-PEX6 AAA ATPase complex, which is composed of a heterohexamer formed by a trimer of PEX1-PEX6 dimers.

The protein localises to the cytoplasm. It is found in the cytosol. Its subcellular location is the peroxisome membrane. The catalysed reaction is ATP + H2O = ADP + phosphate + H(+). Component of the PEX1-PEX6 AAA ATPase complex, a protein dislocase complex that mediates the ATP-dependent extraction of the PEX5 receptor from peroxisomal membranes, an essential step for PEX5 recycling. Specifically recognizes PEX5 monoubiquitinated at 'Cys-6', and pulls it out of the peroxisome lumen through the PEX2-PEX10-PEX12 retrotranslocation channel. Extraction by the PEX1-PEX6 AAA ATPase complex is accompanied by unfolding of the TPR repeats and release of bound cargo from PEX5. The polypeptide is Peroxisomal ATPase PEX6 (pex-6) (Neurospora crassa (strain ATCC 24698 / 74-OR23-1A / CBS 708.71 / DSM 1257 / FGSC 987)).